The sequence spans 59 residues: Small ribosomal subunit protein bS21 (59 aa).

Belongs to the bacterial ribosomal protein bS21 family.

The sequence is that of Small ribosomal subunit protein bS21 from Acholeplasma laidlawii (strain PG-8A).